The chain runs to 311 residues: Replicative helicase loader DnaI (311 aa).

Positions 1–136 (MEPIGRSLQG…LGATFQQVDI (136 aa)) are N-terminal domain (Nd). The Zn(2+) site is built by cysteine 67, cysteine 70, histidine 84, and cysteine 101. The interval 137–311 (SDPSRLAMFQ…RLDGENRRHP (175 aa)) is C-terminal domain (Cd). An ATP-binding site is contributed by 168–175 (GKFGVGKT).

The protein belongs to the DnaI family. In terms of assembly, the DNA replisome assembles sequentially on oriC in this order; DnaA, DnaD, DnaB, DnaI-DnaC helicase. Monomer with a very minor amount of dimer in solution. Interacts with replicative helicase (from G.stearothermophilus, called DnaB); this interaction is disrupted by DnaD. Interacts with replicative helicase DnaC, forms a DnaC(6):DnaI(6) complex. Interacts with the helicase as 3 dimers. A stable complex with DnaG primase, DnaI(6):helicase(6):DnaG(3) fragment can be isolated; DnaI and DnaG do not contact each other (helicase and DnaG in this complex are derived from G.stearothermophilus). Requires Zn(2+) as cofactor.

It localises to the cytoplasm. The catalysed reaction is ATP + H2O = ADP + phosphate + H(+). Its function is as follows. Helps load the DnaC replicative helicase onto single-stranded (ss)DNA and simulates the helicase activity; in the presence of DnaB more helicase activity is seen. Regulates DnaC helicase activity, at low concentrations stimulates the DNA helicase and ATPase activities of DnaC. Has no measurable ATPase activity after 1 hour incubation of 6 uM DnaI with or without DNA. Another group has found the protein has weak ATPase activity that is not stimulated by ssDNA. Whole protein binds forked DNA (but not ssDNA) weakly; ATP and ADPNP (probably 5'-adenylyl beta, gamma-imidodiphosphate) have no effect on DNA binding. DnaB, DnaD and DnaI may be required for a PriA-independent pathway of replication fork restart. This chain is Replicative helicase loader DnaI, found in Bacillus subtilis (strain 168).